A 174-amino-acid polypeptide reads, in one-letter code: Larval cuticle protein LCP-22 (174 aa).

The first 16 residues, 1 to 16 (MKFAVVFACMVAAVAA), serve as a signal peptide directing secretion. The 72-residue stretch at 82 to 153 (DGSYTYFYET…PTGNAIPTSP (72 aa)) folds into the Chitin-binding type R&amp;R domain.

Component of the cuticle of the larva of Bombyx mori. The sequence is that of Larval cuticle protein LCP-22 (LCP22) from Bombyx mori (Silk moth).